The following is a 708-amino-acid chain: Ribosomal RNA large subunit methyltransferase K/L (708 aa).

Residues 43 to 154 (QGYQITLWTR…RGKITIGINF (112 aa)) enclose the THUMP domain.

The protein belongs to the methyltransferase superfamily. RlmKL family.

Its subcellular location is the cytoplasm. The catalysed reaction is guanosine(2445) in 23S rRNA + S-adenosyl-L-methionine = N(2)-methylguanosine(2445) in 23S rRNA + S-adenosyl-L-homocysteine + H(+). The enzyme catalyses guanosine(2069) in 23S rRNA + S-adenosyl-L-methionine = N(2)-methylguanosine(2069) in 23S rRNA + S-adenosyl-L-homocysteine + H(+). Functionally, specifically methylates the guanine in position 2445 (m2G2445) and the guanine in position 2069 (m7G2069) of 23S rRNA. The polypeptide is Ribosomal RNA large subunit methyltransferase K/L (Shewanella amazonensis (strain ATCC BAA-1098 / SB2B)).